Reading from the N-terminus, the 248-residue chain is Pulmonary surfactant-associated protein A (248 aa).

A signal peptide spans 1-17 (MWLRCLALALTLLMVSG). A glycan (N-linked (GlcNAc...) asparagine) is linked at Asn-20. Positions 28–100 (GNPGIPGTPG…PGERGPPGLP (73 aa)) constitute a Collagen-like domain. The disordered stretch occupies residues 29–103 (NPGIPGTPGS…RGPPGLPASL (75 aa)). Residues Pro-30, Pro-33, Pro-36, Pro-42, Pro-54, Pro-57, Pro-63, Pro-67, and Pro-70 each carry the 4-hydroxyproline modification. Basic and acidic residues predominate over residues 42-51 (PGRDGRDGVK). Pro residues predominate over residues 54 to 65 (PGPPGPLGPPGG). A compositionally biased stretch (basic and acidic residues) spans 84-93 (ERGEKGEPGE). The C-type lectin domain occupies 132-248 (LVVGRKVFSS…LQYRLAICEF (117 aa)). Disulfide bonds link Cys-155–Cys-246 and Cys-224–Cys-238. A glycan (N-linked (GlcNAc...) asparagine) is linked at Asn-207. Glu-215, Arg-217, and Asn-234 together coordinate Ca(2+).

This sequence belongs to the SFTPA family. As to quaternary structure, oligomeric complex of 6 set of homotrimers.

The protein resides in the secreted. Its subcellular location is the extracellular space. It is found in the extracellular matrix. It localises to the surface film. In terms of biological role, in presence of calcium ions, it binds to surfactant phospholipids and contributes to lower the surface tension at the air-liquid interface in the alveoli of the mammalian lung and is essential for normal respiration. Enhances the expression of MYO18A/SP-R210 on alveolar macrophages. The protein is Pulmonary surfactant-associated protein A (SFTPA1) of Canis lupus familiaris (Dog).